Consider the following 32-residue polypeptide: Potassium channel toxin alpha-KTx 10.2 (32 aa).

Disulfide bonds link cysteine 3/cysteine 22, cysteine 8/cysteine 12, and cysteine 27/cysteine 29. Residue tyrosine 32 is modified to Tyrosine amide.

The protein belongs to the short scorpion toxin superfamily. Potassium channel inhibitor family. Alpha-KTx 10 subfamily. Expressed by the venom gland.

It localises to the secreted. Its function is as follows. Blocks Shaker B potassium-channels (Kv1.1/KCNA1 sub-family). This chain is Potassium channel toxin alpha-KTx 10.2, found in Centruroides noxius (Mexican scorpion).